The following is a 145-amino-acid chain: D-aminoacyl-tRNA deacylase (145 aa).

The Gly-cisPro motif, important for rejection of L-amino acids motif lies at 137 to 138 (GP).

It belongs to the DTD family. In terms of assembly, homodimer.

It is found in the cytoplasm. It carries out the reaction glycyl-tRNA(Ala) + H2O = tRNA(Ala) + glycine + H(+). It catalyses the reaction a D-aminoacyl-tRNA + H2O = a tRNA + a D-alpha-amino acid + H(+). In terms of biological role, an aminoacyl-tRNA editing enzyme that deacylates mischarged D-aminoacyl-tRNAs. Also deacylates mischarged glycyl-tRNA(Ala), protecting cells against glycine mischarging by AlaRS. Acts via tRNA-based rather than protein-based catalysis; rejects L-amino acids rather than detecting D-amino acids in the active site. By recycling D-aminoacyl-tRNA to D-amino acids and free tRNA molecules, this enzyme counteracts the toxicity associated with the formation of D-aminoacyl-tRNA entities in vivo and helps enforce protein L-homochirality. The polypeptide is D-aminoacyl-tRNA deacylase (Escherichia coli O81 (strain ED1a)).